A 493-amino-acid polypeptide reads, in one-letter code: tRNA (uracil-5-)-methyltransferase homolog B (493 aa).

The transit peptide at 1-14 directs the protein to the mitochondrion; that stretch reads MHNPRLFLSRAGFF. S-adenosyl-L-methionine contacts are provided by Gln-312, Glu-362, and Asn-412. Cys-440 serves as the catalytic Nucleophile. The Proton acceptor role is filled by Glu-486.

Belongs to the class I-like SAM-binding methyltransferase superfamily. RNA M5U methyltransferase family.

It localises to the mitochondrion matrix. The enzyme catalyses uridine(54) in tRNA + S-adenosyl-L-methionine = 5-methyluridine(54) in tRNA + S-adenosyl-L-homocysteine + H(+). The catalysed reaction is a uridine in 12S rRNA + S-adenosyl-L-methionine = a 5-methyluridine in 12S rRNA + S-adenosyl-L-homocysteine + H(+). Its function is as follows. Mitochondrial S-adenosyl-L-methionine-dependent methyltransferase that catalyzes the formation of 5-methyl-uridine in tRNAs and 12S rRNA. Catalyzes the methylation of uridine at position 54 (m5U54) in all tRNAs. Specifically methylates the uridine in position 425 of 12S rRNA (m5U425). Does not affect RNA stability or mitochondrial translation. The chain is tRNA (uracil-5-)-methyltransferase homolog B from Mus musculus (Mouse).